A 1076-amino-acid polypeptide reads, in one-letter code: DNA-directed RNA polymerase subunit beta (1076 aa).

Belongs to the RNA polymerase beta chain family. In plastids the minimal PEP RNA polymerase catalytic core is composed of four subunits: alpha, beta, beta', and beta''. When a (nuclear-encoded) sigma factor is associated with the core the holoenzyme is formed, which can initiate transcription.

The protein localises to the plastid. It carries out the reaction RNA(n) + a ribonucleoside 5'-triphosphate = RNA(n+1) + diphosphate. Functionally, DNA-dependent RNA polymerase catalyzes the transcription of DNA into RNA using the four ribonucleoside triphosphates as substrates. The chain is DNA-directed RNA polymerase subunit beta from Euglena longa (Euglenophycean alga).